We begin with the raw amino-acid sequence, 193 residues long: Protein GrpE (193 aa).

Positions 1 to 40 (MTEENRPQPDQPELTVTSESSVQETGENKARTPEQEGEAM) are disordered. The span at 14–25 (LTVTSESSVQET) shows a compositional bias: polar residues.

The protein belongs to the GrpE family. Homodimer.

The protein resides in the cytoplasm. In terms of biological role, participates actively in the response to hyperosmotic and heat shock by preventing the aggregation of stress-denatured proteins, in association with DnaK and GrpE. It is the nucleotide exchange factor for DnaK and may function as a thermosensor. Unfolded proteins bind initially to DnaJ; upon interaction with the DnaJ-bound protein, DnaK hydrolyzes its bound ATP, resulting in the formation of a stable complex. GrpE releases ADP from DnaK; ATP binding to DnaK triggers the release of the substrate protein, thus completing the reaction cycle. Several rounds of ATP-dependent interactions between DnaJ, DnaK and GrpE are required for fully efficient folding. This Nitrosospira multiformis (strain ATCC 25196 / NCIMB 11849 / C 71) protein is Protein GrpE.